Here is a 214-residue protein sequence, read N- to C-terminus: Melanoregulin (214 aa).

A Cholesterol-binding sequence motif motif is present at residues 162–172; that stretch reads LSERYLFVVDR. S213 carries the phosphoserine modification.

This sequence belongs to the melanoregulin family. In terms of assembly, identified in a complex with RILP and DCTN1; interacts directly with RILP, but does not interact directly with DCTN1. Interacts with PRPH2. In terms of processing, palmitoylated. Palmitoylation is required to maintain the protein at the melanosome membrane. As to expression, expressed in photoreceptor cells (at protein level).

It localises to the apical cell membrane. The protein localises to the melanosome membrane. The protein resides in the lysosome membrane. Its subcellular location is the cytoplasmic vesicle membrane. Its function is as follows. Probably functions as a cargo-recognition protein that couples cytoplasmic vesicles to the transport machinery. Plays a role in hair pigmentation, a process that involves shedding of melanosome-containing vesicles from melanocytes, followed by phagocytosis of the melanosome-containing vesicles by keratinocytes. Functions on melanosomes as receptor for RILP and the complex formed by RILP and DCTN1, and thereby contributes to retrograde melanosome transport from the cell periphery to the center. Overexpression causes accumulation of late endosomes and/or lysosomes at the microtubule organising center (MTOC) at the center of the cell. Probably binds cholesterol and requires the presence of cholesterol in membranes to function in microtubule-mediated retrograde organelle transport. Binds phosphatidylinositol 3-phosphate, phosphatidylinositol 4-phosphate, phosphatidylinositol 5-phosphate and phosphatidylinositol 3,5-bisphosphate, but not phosphatidylinositol 3,4-bisphosphate or phosphatidylinositol 4,5-bisphosphate. Required for normal phagosome clearing and normal activation of lysosomal enzymes in lysosomes from retinal pigment epithelium cells. Required for normal degradation of the lipofuscin component N-retinylidene-N-retinylethanolamine (A2E) in the eye. May function in membrane fusion and regulate the biogenesis of disk membranes of photoreceptor rod cells. The polypeptide is Melanoregulin (MREG) (Homo sapiens (Human)).